Reading from the N-terminus, the 615-residue chain is Semenogelin-1 (615 aa).

Positions 1 to 23 (MKPIIFLVLSLLLILEKQAAVMG) are cleaved as a signal peptide. Glutamine 24 carries the pyrrolidone carboxylic acid modification. Disordered stretches follow at residues 24 to 118 (QKGG…EHGK), 133 to 160 (GHAP…SQDS), and 172 to 585 (GKEQ…HRSY). Polar residues predominate over residues 34 to 46 (SESSQFPHGQKGQ). Positions 50–80 (ARKDKQHAESKRSVSIEHTYHVDIPDHDQTR) are enriched in basic and acidic residues. Positions 81 to 91 (TSKQYDLNAQN) are enriched in polar residues. Basic and acidic residues predominate over residues 107-118 (FNHKQEGREHGK). Polar residues-rich tracts occupy residues 138 to 160 (GTQN…SQDS), 177 to 196 (SVSG…SPVL), and 209 to 224 (TQNS…NVNE). Residues asparagine 148, asparagine 184, and asparagine 223 are each glycosylated (N-linked (GlcNAc...) asparagine). A compositionally biased stretch (basic and acidic residues) spans 241–253 (QEDRLQHGSKDVF). Polar residues predominate over residues 254 to 265 (SKNQNQTRNPNQ). 2 N-linked (GlcNAc...) asparagine glycosylation sites follow: asparagine 258 and asparagine 275. Residues 283–300 (TEERRPNHGEKGIQKDAS) are compositionally biased toward basic and acidic residues. Residue asparagine 306 is glycosylated (N-linked (GlcNAc...) asparagine). Residues 308–317 (TEDKMHDKSQ) show a composition bias toward basic and acidic residues. N-linked (GlcNAc...) asparagine glycosylation occurs at asparagine 332. The segment covering 341-358 (TEERRPNHGEKGIQKDAS) has biased composition (basic and acidic residues). Residue asparagine 364 is glycosylated (N-linked (GlcNAc...) asparagine). A compositionally biased stretch (basic and acidic residues) spans 366–375 (TEDKMHDKSQ). Asparagine 390 carries an N-linked (GlcNAc...) asparagine glycan. Residues 399 to 416 (TEERRPNHGEKGIQKDAS) are compositionally biased toward basic and acidic residues. N-linked (GlcNAc...) asparagine glycosylation is present at asparagine 422. Positions 424-433 (TEDKMHDKSQ) are enriched in basic and acidic residues. Asparagine 448 is a glycosylation site (N-linked (GlcNAc...) asparagine). A compositionally biased stretch (basic and acidic residues) spans 457 to 474 (TEERRPNHGEKGIQKDAS). The N-linked (GlcNAc...) asparagine glycan is linked to asparagine 480. The segment covering 481–491 (KTEDKMHDKSQ) has biased composition (basic and acidic residues). The N-linked (GlcNAc...) asparagine glycan is linked to asparagine 506. Over residues 515–532 (TEERRPNHGEKGIQKDAS) the composition is skewed to basic and acidic residues. An N-linked (GlcNAc...) asparagine glycan is attached at asparagine 538. A compositionally biased stretch (basic and acidic residues) spans 539–549 (KTEDEKHDKSQ). Positions 550–563 (KQVTTPSQDQQSGQ) are enriched in polar residues.

This sequence belongs to the semenogelin family. In terms of assembly, occurs in disulfide-linked complexes. In terms of processing, transglutaminase substrate. Rapidly cleaved after ejaculation by KLK3/PSA, resulting in liquefaction of the semen coagulum and the progressive release of motile spermatozoa.

Its subcellular location is the secreted. In terms of biological role, predominant protein in semen. It participates in the formation of a gel matrix entrapping the accessory gland secretions and ejaculated spermatozoa. Fragments of semenogelin and/or fragments of the related proteins may contribute to the activation of progressive sperm movements as the gel-forming proteins are fragmented by KLK3/PSA. The sequence is that of Semenogelin-1 (SEMG1) from Saguinus oedipus (Cotton-top tamarin).